We begin with the raw amino-acid sequence, 290 residues long: Nucleotide-binding protein LAR_0375 (290 aa).

13–20 (GMSGAGKT) is an ATP binding site. 63–66 (DMRS) contacts GTP.

This sequence belongs to the RapZ-like family.

Its function is as follows. Displays ATPase and GTPase activities. In Limosilactobacillus reuteri subsp. reuteri (strain JCM 1112) (Lactobacillus reuteri), this protein is Nucleotide-binding protein LAR_0375.